Reading from the N-terminus, the 318-residue chain is MAVFPIINLENINDDGRAKILEQIEDACQNWGFFELVNHGIPHEFLDMVEKMTRDHYKKCMEERFKETVLSKGLEAAQAEVNDMDWESTFFLRHLPESNISQMSDLDEEYKKIMKEFAKKLENLAEELLDLLCENLGLEKGYLKKAFYGSKGPTFGTKVSNYPPCPKPDLIKGLRAHTDAGGIILLFQDDKVSGLQLLKDGNWIDVPPMRHAIVVNLGDQLEVITNGRYKSVMHRVLTQTSGTGRMSIASFYNPGSDAVIYPAPALVEKDQDEEKKEVYPKFVFEDYMKLYLGVKFQAKEPRFEAMKANANLGPMATA.

Residues 153 to 254 enclose the Fe2OG dioxygenase domain; it reads PTFGTKVSNY…RMSIASFYNP (102 aa). The Fe cation site is built by His-177, Asp-179, and His-234.

The protein belongs to the iron/ascorbate-dependent oxidoreductase family. Requires Fe cation as cofactor. Fruit.

The enzyme catalyses 1-aminocyclopropane-1-carboxylate + L-ascorbate + O2 = ethene + L-dehydroascorbate + hydrogen cyanide + CO2 + 2 H2O. It functions in the pathway alkene biosynthesis; ethylene biosynthesis via S-adenosyl-L-methionine; ethylene from S-adenosyl-L-methionine: step 2/2. This is 1-aminocyclopropane-1-carboxylate oxidase 1 (ACO1) from Cucumis melo (Muskmelon).